A 125-amino-acid polypeptide reads, in one-letter code: Small ribosomal subunit protein uS13 (125 aa).

The disordered stretch occupies residues Gln90–Lys125.

This sequence belongs to the universal ribosomal protein uS13 family. In terms of assembly, part of the 30S ribosomal subunit. Forms a loose heterodimer with protein S19. Forms two bridges to the 50S subunit in the 70S ribosome.

Functionally, located at the top of the head of the 30S subunit, it contacts several helices of the 16S rRNA. In the 70S ribosome it contacts the 23S rRNA (bridge B1a) and protein L5 of the 50S subunit (bridge B1b), connecting the 2 subunits; these bridges are implicated in subunit movement. Contacts the tRNAs in the A and P-sites. This chain is Small ribosomal subunit protein uS13, found in Bifidobacterium longum subsp. infantis (strain ATCC 15697 / DSM 20088 / JCM 1222 / NCTC 11817 / S12).